A 303-amino-acid chain; its full sequence is Acetylglutamate kinase (303 aa).

Residues 76 to 77 (GG), R98, and N199 each bind substrate.

It belongs to the acetylglutamate kinase family. ArgB subfamily.

The protein resides in the cytoplasm. The enzyme catalyses N-acetyl-L-glutamate + ATP = N-acetyl-L-glutamyl 5-phosphate + ADP. It participates in amino-acid biosynthesis; L-arginine biosynthesis; N(2)-acetyl-L-ornithine from L-glutamate: step 2/4. In terms of biological role, catalyzes the ATP-dependent phosphorylation of N-acetyl-L-glutamate. The sequence is that of Acetylglutamate kinase from Clavibacter sepedonicus (Clavibacter michiganensis subsp. sepedonicus).